A 305-amino-acid polypeptide reads, in one-letter code: Probable 4-deoxy-4-formamido-L-arabinose-phosphoundecaprenol deformylase ArnD (305 aa).

The NodB homology domain occupies 7 to 262; the sequence is TKVGLRIDVD…QAKENNIEFV (256 aa).

Belongs to the polysaccharide deacetylase family. ArnD deformylase subfamily.

The enzyme catalyses 4-deoxy-4-formamido-alpha-L-arabinopyranosyl di-trans,octa-cis-undecaprenyl phosphate + H2O = 4-amino-4-deoxy-alpha-L-arabinopyranosyl di-trans,octa-cis-undecaprenyl phosphate + formate. Its pathway is glycolipid biosynthesis; 4-amino-4-deoxy-alpha-L-arabinose undecaprenyl phosphate biosynthesis; 4-amino-4-deoxy-alpha-L-arabinose undecaprenyl phosphate from UDP-4-deoxy-4-formamido-beta-L-arabinose and undecaprenyl phosphate: step 2/2. It functions in the pathway bacterial outer membrane biogenesis; lipopolysaccharide biosynthesis. Its function is as follows. Catalyzes the deformylation of 4-deoxy-4-formamido-L-arabinose-phosphoundecaprenol to 4-amino-4-deoxy-L-arabinose-phosphoundecaprenol. The modified arabinose is attached to lipid A and is required for resistance to polymyxin and cationic antimicrobial peptides. In Shewanella sediminis (strain HAW-EB3), this protein is Probable 4-deoxy-4-formamido-L-arabinose-phosphoundecaprenol deformylase ArnD.